Here is a 203-residue protein sequence, read N- to C-terminus: FMN-dependent NADH:quinone oxidoreductase (203 aa).

FMN-binding positions include Ser-9, 15 to 17 (SVS), and 138 to 141 (SRGG).

This sequence belongs to the azoreductase type 1 family. Homodimer. Requires FMN as cofactor.

The enzyme catalyses 2 a quinone + NADH + H(+) = 2 a 1,4-benzosemiquinone + NAD(+). It catalyses the reaction N,N-dimethyl-1,4-phenylenediamine + anthranilate + 2 NAD(+) = 2-(4-dimethylaminophenyl)diazenylbenzoate + 2 NADH + 2 H(+). Its function is as follows. Quinone reductase that provides resistance to thiol-specific stress caused by electrophilic quinones. Functionally, also exhibits azoreductase activity. Catalyzes the reductive cleavage of the azo bond in aromatic azo compounds to the corresponding amines. In Methylorubrum extorquens (strain PA1) (Methylobacterium extorquens), this protein is FMN-dependent NADH:quinone oxidoreductase.